A 461-amino-acid chain; its full sequence is MFFMRMICNCINSISMKAQKMDKPVFGWRRNGDDLSLSDVHSSIRIKPDASTFRRAMAFFGPGYLVAVGYMDPGNWATSLAGGSKFGYTLLAVALVSNIMAIVLQSLCARLAIASGRDLAQACRDAYPKPVAMVLWLLAEIAIIATDIAEVIGTAIGLNLIFGIPLELGVLITALDVFLILYLQKLGFRWVEALVITLLGVIAVCFAIQLALADPDWGQVILGFAPTTEIVTNPDMLYLALGILGATVMPHNLYLHSGIVQTREIGPTIAEKREALKFATLDSTIALMFALLINASILILAAATFNKTGQTNVAELGEAHSLLAPLLGLAIAPTLFGVALLCCGINSTVTATLAGQIVMEGFLKMRLAPWLRRLITRAIAIVPAAGVTIFYGDSGTGQLLILTQVVLSLQLSFAVFPLVMFTSDKAKMGELRSPLWLSAIAWLIAVVIAALNVKLLMDFMG.

11 helical membrane-spanning segments follow: residues 56–76 (AMAF…PGNW), 89–109 (TLLA…SLCA), 132–152 (AMVL…AEVI), 160–180 (LIFG…VFLI), 193–213 (ALVI…LALA), 230–250 (IVTN…TVMP), 285–305 (IALM…AATF), 322–342 (LLAP…ALLC), 378–398 (AIAI…GTGQ), 399–419 (LLIL…FPLV), and 433–453 (SPLW…ALNV).

It belongs to the NRAMP family.

It is found in the cell inner membrane. Functionally, h(+)-stimulated, divalent metal cation uptake system. The polypeptide is Divalent metal cation transporter MntH (Agrobacterium fabrum (strain C58 / ATCC 33970) (Agrobacterium tumefaciens (strain C58))).